A 236-amino-acid polypeptide reads, in one-letter code: Purine nucleoside phosphorylase DeoD-type (236 aa).

Position 4 (His-4) interacts with a purine D-ribonucleoside. Phosphate-binding positions include Gly-20, Arg-24, Arg-43, and Arg-87–Thr-90. A purine D-ribonucleoside is bound by residues Glu-179–Glu-181 and Ser-203–Asp-204. Catalysis depends on Asp-204, which acts as the Proton donor.

It belongs to the PNP/UDP phosphorylase family. In terms of assembly, homohexamer; trimer of homodimers.

The catalysed reaction is a purine D-ribonucleoside + phosphate = a purine nucleobase + alpha-D-ribose 1-phosphate. It catalyses the reaction a purine 2'-deoxy-D-ribonucleoside + phosphate = a purine nucleobase + 2-deoxy-alpha-D-ribose 1-phosphate. In terms of biological role, catalyzes the reversible phosphorolytic breakdown of the N-glycosidic bond in the beta-(deoxy)ribonucleoside molecules, with the formation of the corresponding free purine bases and pentose-1-phosphate. The polypeptide is Purine nucleoside phosphorylase DeoD-type (Streptococcus pneumoniae serotype 2 (strain D39 / NCTC 7466)).